Here is a 496-residue protein sequence, read N- to C-terminus: Probable cytosol aminopeptidase (496 aa).

Mn(2+) is bound by residues Lys-267 and Asp-272. The active site involves Lys-279. Residues Asp-290, Asp-349, and Glu-351 each coordinate Mn(2+). Arg-353 is an active-site residue.

This sequence belongs to the peptidase M17 family. Mn(2+) is required as a cofactor.

It localises to the cytoplasm. The catalysed reaction is Release of an N-terminal amino acid, Xaa-|-Yaa-, in which Xaa is preferably Leu, but may be other amino acids including Pro although not Arg or Lys, and Yaa may be Pro. Amino acid amides and methyl esters are also readily hydrolyzed, but rates on arylamides are exceedingly low.. It carries out the reaction Release of an N-terminal amino acid, preferentially leucine, but not glutamic or aspartic acids.. Functionally, presumably involved in the processing and regular turnover of intracellular proteins. Catalyzes the removal of unsubstituted N-terminal amino acids from various peptides. The protein is Probable cytosol aminopeptidase of Methylobacillus flagellatus (strain ATCC 51484 / DSM 6875 / VKM B-1610 / KT).